The primary structure comprises 161 residues: Ureidoglycolate lyase (161 aa).

The protein belongs to the ureidoglycolate lyase family. In terms of assembly, homodimer. It depends on Ni(2+) as a cofactor.

The catalysed reaction is (S)-ureidoglycolate = urea + glyoxylate. The protein operates within nitrogen metabolism; (S)-allantoin degradation. Functionally, catalyzes the catabolism of the allantoin degradation intermediate (S)-ureidoglycolate, generating urea and glyoxylate. Involved in the utilization of allantoin as nitrogen source. The polypeptide is Ureidoglycolate lyase (Rhodobacter capsulatus (strain ATCC BAA-309 / NBRC 16581 / SB1003)).